A 492-amino-acid polypeptide reads, in one-letter code: Bifunctional purine biosynthesis protein PurH (492 aa).

The region spanning 1-144 (MRKALLSVSD…KNFRHVITVV (144 aa)) is the MGS-like domain.

Belongs to the PurH family.

The catalysed reaction is (6R)-10-formyltetrahydrofolate + 5-amino-1-(5-phospho-beta-D-ribosyl)imidazole-4-carboxamide = 5-formamido-1-(5-phospho-D-ribosyl)imidazole-4-carboxamide + (6S)-5,6,7,8-tetrahydrofolate. It catalyses the reaction IMP + H2O = 5-formamido-1-(5-phospho-D-ribosyl)imidazole-4-carboxamide. It participates in purine metabolism; IMP biosynthesis via de novo pathway; 5-formamido-1-(5-phospho-D-ribosyl)imidazole-4-carboxamide from 5-amino-1-(5-phospho-D-ribosyl)imidazole-4-carboxamide (10-formyl THF route): step 1/1. Its pathway is purine metabolism; IMP biosynthesis via de novo pathway; IMP from 5-formamido-1-(5-phospho-D-ribosyl)imidazole-4-carboxamide: step 1/1. The chain is Bifunctional purine biosynthesis protein PurH from Macrococcus caseolyticus (strain JCSC5402) (Macrococcoides caseolyticum).